We begin with the raw amino-acid sequence, 189 residues long: Elongation factor P (189 aa).

This sequence belongs to the elongation factor P family.

Its subcellular location is the cytoplasm. Its pathway is protein biosynthesis; polypeptide chain elongation. Involved in peptide bond synthesis. Stimulates efficient translation and peptide-bond synthesis on native or reconstituted 70S ribosomes in vitro. Probably functions indirectly by altering the affinity of the ribosome for aminoacyl-tRNA, thus increasing their reactivity as acceptors for peptidyl transferase. This is Elongation factor P from Pseudomonas entomophila (strain L48).